We begin with the raw amino-acid sequence, 273 residues long: MSDNKERKSQGFPKEDNQDTSSLADAVEKVAKQQQSQASEIEKNKKVLFNLKNELHELEKEIAAISAETKETERQIYQQDSAIENTKLHCDSLETQIKSLHSENVKLKFDIETAQEDFEEHMIKYNAYYAKIKAHKNSLGEVESKWSFMTELHEKRDFVKKLKTMKEELMQDLQNPGGNRITQVQEDITNLKDKIITVKESIIEKTCFLEEEKKTHEKLRKEIEVQHKRYDAILKRLHCQVNKLQSNRRQWQWNIQQLEKTAAELRKCIGMQE.

The span at 1 to 17 (MSDNKERKSQGFPKEDN) shows a compositional bias: basic and acidic residues. The disordered stretch occupies residues 1-39 (MSDNKERKSQGFPKEDNQDTSSLADAVEKVAKQQQSQAS). Coiled-coil stretches lie at residues 24–116 (ADAV…TAQE) and 179–269 (NRIT…RKCI).

In Homo sapiens (Human), this protein is Coiled-coil domain-containing protein 122 (CCDC122).